A 161-amino-acid polypeptide reads, in one-letter code: Endoribonuclease YbeY (161 aa).

His127, His131, and His137 together coordinate Zn(2+).

This sequence belongs to the endoribonuclease YbeY family. It depends on Zn(2+) as a cofactor.

The protein resides in the cytoplasm. In terms of biological role, single strand-specific metallo-endoribonuclease involved in late-stage 70S ribosome quality control and in maturation of the 3' terminus of the 16S rRNA. The chain is Endoribonuclease YbeY from Listeria innocua serovar 6a (strain ATCC BAA-680 / CLIP 11262).